A 152-amino-acid polypeptide reads, in one-letter code: Superoxide dismutase [Cu-Zn] 4AP (152 aa).

The Cu cation site is built by His-45, His-47, and His-62. A disulfide bond links Cys-56 and Cys-145. The Zn(2+) site is built by His-62, His-70, His-79, and Asp-82. Cu cation is bound at residue His-119.

The protein belongs to the Cu-Zn superoxide dismutase family. Homodimer. Cu cation serves as cofactor. Zn(2+) is required as a cofactor.

It localises to the cytoplasm. The enzyme catalyses 2 superoxide + 2 H(+) = H2O2 + O2. In terms of biological role, destroys radicals which are normally produced within the cells and which are toxic to biological systems. This chain is Superoxide dismutase [Cu-Zn] 4AP (SODCC.2), found in Zea mays (Maize).